Consider the following 292-residue polypeptide: Pantothenate synthetase (292 aa).

Residue 30-37 (MGALHEGH) participates in ATP binding. His37 acts as the Proton donor in catalysis. Position 61 (Gln61) interacts with (R)-pantoate. Gln61 provides a ligand contact to beta-alanine. 147 to 150 (GEKD) contributes to the ATP binding site. Gln153 is a (R)-pantoate binding site. 184–187 (VSSR) contacts ATP.

Belongs to the pantothenate synthetase family. In terms of assembly, homodimer.

The protein resides in the cytoplasm. It carries out the reaction (R)-pantoate + beta-alanine + ATP = (R)-pantothenate + AMP + diphosphate + H(+). Its pathway is cofactor biosynthesis; (R)-pantothenate biosynthesis; (R)-pantothenate from (R)-pantoate and beta-alanine: step 1/1. Catalyzes the condensation of pantoate with beta-alanine in an ATP-dependent reaction via a pantoyl-adenylate intermediate. The protein is Pantothenate synthetase of Chlorobium phaeovibrioides (strain DSM 265 / 1930) (Prosthecochloris vibrioformis (strain DSM 265)).